The chain runs to 566 residues: Tetratricopeptide repeat protein 34 (566 aa).

The disordered stretch occupies residues 1–29 (MLQRSPRAGPSRAQGRREAAETGGPTTQE). TPR repeat units lie at residues 50–83 (EASR…RPQA), 178–211 (SESL…EPGN), 212–245 (VQAL…GPGT), 306–339 (PHWH…APTS), 341–373 (AARA…DAPD), 424–457 (ACHL…ALGD), 464–497 (AEDF…APSL), and 512–545 (ARMF…DPDH).

The chain is Tetratricopeptide repeat protein 34 (TTC34) from Homo sapiens (Human).